Consider the following 64-residue polypeptide: MRVLYLLFSFLFIFLMPLPGVFGGIGDPVTCLKSGAICHPVFCPRRYKQIGTCGLPGTKCCKKP.

Positions 1–23 (MRVLYLLFSFLFIFLMPLPGVFG) are cleaved as a signal peptide. Disulfide bonds link C31-C60, C38-C53, and C43-C61. Residues 33–48 (KSGAICHPVFCPRRYK) form a phosphatidylinositol 4,5-bisphosphate (PIP2) binding region.

This sequence belongs to the beta-defensin family. LAP/TAP subfamily. Monomer. Homodimer. In terms of tissue distribution, expressed in lung epithelial cells (at protein level). Expressed in foreskin, lung and trachea. Lower expression in kidney, uterus and salivary gland tissue. Expressed in epithelial cells of the respiratory tract, with higher expression in distal parenchyma of the lung, trachea, and tonsils, and lower expression in pharynx and adenoid, and low expression in tongue and larynx.

It localises to the secreted. Functionally, exhibits antimicrobial activity against Gram-negative bacteria and Gram-positive bacteria, with highest activity against Gram-negative bacteria. Antimicrobial activity against P.aruginosa seems to be salt-sensitive and is reduced with high salt concentrations greater than 25 mM. Also exhibits antimicrobial activity against the yeast C.albicans. Permeabilizes C.albicans cell membranes via targeting plasma membrane lipid phosphatidylinositol 4,5-bisphosphate (PIP2), thereby leading to cell fragmentation and cell death. Acts as a ligand for C-C chemokine receptor CCR6. Binds to CCR6 and induces chemotactic activity of CCR6-expressing cells, such as immature dendritic cells and memory T cells. This is Defensin beta 4A (DEFB4A) from Homo sapiens (Human).